The primary structure comprises 119 residues: Large ribosomal subunit protein bL20 (119 aa).

This sequence belongs to the bacterial ribosomal protein bL20 family.

Its function is as follows. Binds directly to 23S ribosomal RNA and is necessary for the in vitro assembly process of the 50S ribosomal subunit. It is not involved in the protein synthesizing functions of that subunit. The sequence is that of Large ribosomal subunit protein bL20 from Jannaschia sp. (strain CCS1).